A 281-amino-acid polypeptide reads, in one-letter code: Urease accessory protein UreD (281 aa).

Residues 1-25 form a disordered region; the sequence is MLNTLEPQPCETDALSPRLQRSTGS.

Belongs to the UreD family. As to quaternary structure, ureD, UreF and UreG form a complex that acts as a GTP-hydrolysis-dependent molecular chaperone, activating the urease apoprotein by helping to assemble the nickel containing metallocenter of UreC. The UreE protein probably delivers the nickel.

The protein localises to the cytoplasm. In terms of biological role, required for maturation of urease via the functional incorporation of the urease nickel metallocenter. In Dinoroseobacter shibae (strain DSM 16493 / NCIMB 14021 / DFL 12), this protein is Urease accessory protein UreD.